We begin with the raw amino-acid sequence, 777 residues long: DNA ligase (777 aa).

NAD(+)-binding positions include 35–39 (DAEYD), 84–85 (SL), and Glu-116. The active-site N6-AMP-lysine intermediate is Lys-118. Residues Arg-139, Glu-176, Lys-293, and Lys-317 each contribute to the NAD(+) site. Residues Cys-411, Cys-414, Cys-429, and Cys-435 each contribute to the Zn(2+) site. The BRCT domain maps to 691 to 777 (MESQPLEGQT…NQHGIDPGAL (87 aa)).

The protein belongs to the NAD-dependent DNA ligase family. LigA subfamily. It depends on Mg(2+) as a cofactor. The cofactor is Mn(2+).

It carries out the reaction NAD(+) + (deoxyribonucleotide)n-3'-hydroxyl + 5'-phospho-(deoxyribonucleotide)m = (deoxyribonucleotide)n+m + AMP + beta-nicotinamide D-nucleotide.. Its function is as follows. DNA ligase that catalyzes the formation of phosphodiester linkages between 5'-phosphoryl and 3'-hydroxyl groups in double-stranded DNA using NAD as a coenzyme and as the energy source for the reaction. It is essential for DNA replication and repair of damaged DNA. In Alcanivorax borkumensis (strain ATCC 700651 / DSM 11573 / NCIMB 13689 / SK2), this protein is DNA ligase.